We begin with the raw amino-acid sequence, 295 residues long: Protoheme IX farnesyltransferase 2 (295 aa).

The next 9 helical transmembrane spans lie at Ile9–Ala29, Leu36–Phe56, Val85–Ala105, Leu108–Leu128, Gly135–Ser155, Leu163–Phe183, Ile209–Ala229, Gly230–Thr250, and Lys263–Phe283.

Belongs to the UbiA prenyltransferase family. Protoheme IX farnesyltransferase subfamily.

Its subcellular location is the cell inner membrane. The catalysed reaction is heme b + (2E,6E)-farnesyl diphosphate + H2O = Fe(II)-heme o + diphosphate. Its pathway is porphyrin-containing compound metabolism; heme O biosynthesis; heme O from protoheme: step 1/1. In terms of biological role, converts heme B (protoheme IX) to heme O by substitution of the vinyl group on carbon 2 of heme B porphyrin ring with a hydroxyethyl farnesyl side group. This is Protoheme IX farnesyltransferase 2 from Pseudomonas fluorescens (strain ATCC BAA-477 / NRRL B-23932 / Pf-5).